Consider the following 617-residue polypeptide: Leucine aminopeptidase 2 (617 aa).

A peptide-binding positions include 139-141 (QCQ) and 271-276 (PYGGME). Zn(2+) is bound at residue H300. The Proton acceptor role is filled by E301. Zn(2+) is bound by residues H304 and E323. Y388 serves as the catalytic Proton donor.

The protein belongs to the peptidase M1 family. Zn(2+) is required as a cofactor.

The protein resides in the cytoplasm. It localises to the nucleus. It catalyses the reaction an epoxide + H2O = an ethanediol. Functionally, aminopeptidase that preferentially cleaves di- and tripeptides. Also has low epoxide hydrolase activity (in vitro). Can hydrolyze the epoxide leukotriene LTA(4) but it forms preferentially 5,6-dihydroxy-7,9,11,14-eicosatetraenoic acid rather than the cytokine leukotriene B(4) as the product compared to the homologous mammalian enzyme (in vitro). This Aspergillus terreus (strain NIH 2624 / FGSC A1156) protein is Leucine aminopeptidase 2.